Reading from the N-terminus, the 456-residue chain is Glycerol-3-phosphate acyltransferase 4 (456 aa).

The signal sequence occupies residues 1–37; sequence MFLLLPFDSLIVNLLGISLTVLFTLLLVFIIVPAIFG. The next 2 membrane-spanning stretches (helical) occupy residues 156–176 and 180–200; these read ISLR…CFLL and IALA…VGYL. N247 is a glycosylation site (N-linked (GlcNAc...) asparagine). The HXXXXD motif motif lies at 248-253; it reads HTSPID. N-linked (GlcNAc...) asparagine glycosylation is found at N327, N328, and N362.

It belongs to the 1-acyl-sn-glycerol-3-phosphate acyltransferase family.

The protein localises to the endoplasmic reticulum membrane. The enzyme catalyses sn-glycerol 3-phosphate + an acyl-CoA = a 1-acyl-sn-glycero-3-phosphate + CoA. It carries out the reaction dodecanoyl-CoA + sn-glycerol 3-phosphate = 1-dodecanoyl-sn-glycerol 3-phosphate + CoA. The catalysed reaction is sn-glycerol 3-phosphate + hexadecanoyl-CoA = 1-hexadecanoyl-sn-glycero-3-phosphate + CoA. It catalyses the reaction sn-glycerol 3-phosphate + octadecanoyl-CoA = 1-octadecanoyl-sn-glycero-3-phosphate + CoA. The enzyme catalyses sn-glycerol 3-phosphate + (9Z)-octadecenoyl-CoA = 1-(9Z-octadecenoyl)-sn-glycero-3-phosphate + CoA. It carries out the reaction (9Z,12Z)-octadecadienoyl-CoA + sn-glycerol 3-phosphate = 1-(9Z,12Z)-octadecadienoyl-sn-glycero-3-phosphate + CoA. It functions in the pathway phospholipid metabolism; CDP-diacylglycerol biosynthesis; CDP-diacylglycerol from sn-glycerol 3-phosphate: step 1/3. In terms of biological role, converts glycerol-3-phosphate to 1-acyl-sn-glycerol-3-phosphate (lysophosphatidic acid or LPA) by incorporating an acyl moiety at the sn-1 position of the glycerol backbone. Active against both saturated and unsaturated long-chain fatty acyl-CoAs. Protects cells against lipotoxicity. The sequence is that of Glycerol-3-phosphate acyltransferase 4 from Pongo abelii (Sumatran orangutan).